We begin with the raw amino-acid sequence, 201 residues long: Recombination protein RecR (201 aa).

A C4-type zinc finger spans residues 57–72; sequence CADCRTFTEQDVCNIC. The region spanning 81-176 is the Toprim domain; that stretch reads GQICVVESPA…EASRIAHGVP (96 aa).

Belongs to the RecR family.

In terms of biological role, may play a role in DNA repair. It seems to be involved in an RecBC-independent recombinational process of DNA repair. It may act with RecF and RecO. The polypeptide is Recombination protein RecR (Salmonella choleraesuis (strain SC-B67)).